The sequence spans 46 residues: MTPMRITVWRKRLQQMRPQRKLLKQTQQRRLLHQLQQRKLLQQTSL.

Functionally, seems to play a role in virus replication. The protein is Replication-associated protein of Solanum tuberosum (Potato).